Consider the following 279-residue polypeptide: MTTRRLMLVHAHPDDESLTTGGTIARYAAEGADVQLVTCTLGEEGEVIGDRWAQLAVDQADQLGGYRIGELSTALRHLGVDGPTFLGGAGRWRDSGMADTTPLHPRAFAGADLNEAVGALTALIDEHRPHVVVTYDPFGGYGHPDHIQAHTVTTAAVEKASWQVAKLYWTVIATSALETGLASITQLPPGCQPAPLDLIPTFADEKISAAIDVSGHREAKVAALRAHATQLTVSDDGSSMALSNLIALPIADIEHFVLVRGEPGVDTGWESDLFAGVEL.

Positions 12, 15, and 146 each coordinate Zn(2+).

It belongs to the MshB deacetylase family. It depends on Zn(2+) as a cofactor.

The catalysed reaction is 1D-myo-inositol 2-acetamido-2-deoxy-alpha-D-glucopyranoside + H2O = 1D-myo-inositol 2-amino-2-deoxy-alpha-D-glucopyranoside + acetate. Functionally, catalyzes the deacetylation of 1D-myo-inositol 2-acetamido-2-deoxy-alpha-D-glucopyranoside (GlcNAc-Ins) in the mycothiol biosynthesis pathway. This Mycobacteroides abscessus (strain ATCC 19977 / DSM 44196 / CCUG 20993 / CIP 104536 / JCM 13569 / NCTC 13031 / TMC 1543 / L948) (Mycobacterium abscessus) protein is 1D-myo-inositol 2-acetamido-2-deoxy-alpha-D-glucopyranoside deacetylase.